A 150-amino-acid polypeptide reads, in one-letter code: Large ribosomal subunit protein bL9 (150 aa).

The protein belongs to the bacterial ribosomal protein bL9 family.

Binds to the 23S rRNA. In Streptococcus pyogenes serotype M5 (strain Manfredo), this protein is Large ribosomal subunit protein bL9.